The sequence spans 715 residues: Tensin-4 (715 aa).

Positions 1-18 (MSQVMSSPLLAGGHAVSL) are cleaved as a signal peptide. Residue serine 82 is modified to Phosphoserine. Disordered stretches follow at residues 159–183 (RCHDGPQHCSSPSVTPPFGSLRSGG), 195–251 (RSSS…SPLV), 291–364 (SLLH…CPPS), and 376–435 (LING…ARDM). A compositionally biased stretch (polar residues) spans 197–206 (SSESLIFSGN). At serine 248 the chain carries Phosphoserine. Residues 291-325 (SLLHSSNSSHQSSSRSLESPANSSSSLHSLGSVSL) show a composition bias toward low complexity. Residues 449-556 (WFKPNITREQ…ALPCKLTIPQ (108 aa)) enclose the SH2 domain. One can recognise a PTB domain in the interval 582–705 (CHTLYLSSVS…QPASQVIGLV (124 aa)).

This sequence belongs to the PTEN phosphatase protein family. As to quaternary structure, interacts (via SH2 domain) with Rho GTPase-activating protein DLC1 (via C-terminus); the interaction is independent of DLC1 tyrosine phosphorylation. Interacts with integrin ITGB1; the interaction displaces tensin TNS3 from the ITGB1 cytoplasmic tail and promotes ITGB1 stability. Interacts (via SH2 domain) with E3 ubiquitin-protein ligase CBL (phosphorylated on 'Tyr-774'); the interaction is enhanced in the presence of EGF and reduces interaction of CBL with EGFR. Interacts (via SH2 domain) with receptor tyrosine kinase MET (when phosphorylated); the interaction increases MET protein stability. In terms of processing, proteolytically cleaved by caspase-3 during apoptosis. Expressed at low levels in colon (at protein level). Expressed in prostate and placenta.

The protein resides in the cell junction. The protein localises to the focal adhesion. Its subcellular location is the cytoplasm. It localises to the cytoskeleton. In terms of biological role, promotes EGF-induced cell migration by displacing tensin TNS3 from the cytoplasmic tail of integrin ITGB1 which results in dissociation of TNS3 from focal adhesions, disassembly of actin stress fibers and initiation of cell migration. Suppresses ligand-induced degradation of EGFR by reducing EGFR ubiquitination in the presence of EGF. Increases MET protein stability by inhibiting MET endocytosis and subsequent lysosomal degradation which leads to increased cell survival, proliferation and migration. This Homo sapiens (Human) protein is Tensin-4 (TNS4).